Consider the following 146-residue polypeptide: Hemoglobin subunit theta (146 aa).

The 145-residue stretch at 2 to 146 (HFTAEEKSVI…VATALAHKYH (145 aa)) folds into the Globin domain. Residues His63 and His92 each coordinate heme b.

Belongs to the globin family.

The protein is Hemoglobin subunit theta of Sus scrofa (Pig).